We begin with the raw amino-acid sequence, 669 residues long: DNA ligase (669 aa).

NAD(+)-binding positions include Asp-33–Asp-37, Ser-82–Leu-83, and Glu-114. Residue Lys-116 is the N6-AMP-lysine intermediate of the active site. 4 residues coordinate NAD(+): Arg-137, Glu-174, Lys-291, and Lys-315. Zn(2+)-binding residues include Cys-409, Cys-412, Cys-427, and Cys-433. The BRCT domain occupies Glu-593–Leu-669.

The protein belongs to the NAD-dependent DNA ligase family. LigA subfamily. Mg(2+) is required as a cofactor. The cofactor is Mn(2+).

It carries out the reaction NAD(+) + (deoxyribonucleotide)n-3'-hydroxyl + 5'-phospho-(deoxyribonucleotide)m = (deoxyribonucleotide)n+m + AMP + beta-nicotinamide D-nucleotide.. DNA ligase that catalyzes the formation of phosphodiester linkages between 5'-phosphoryl and 3'-hydroxyl groups in double-stranded DNA using NAD as a coenzyme and as the energy source for the reaction. It is essential for DNA replication and repair of damaged DNA. This is DNA ligase from Vibrio vulnificus (strain CMCP6).